Reading from the N-terminus, the 209-residue chain is Ribosomal RNA large subunit methyltransferase E (209 aa).

The S-adenosyl-L-methionine site is built by Gly63, Trp65, Asp83, Asp99, and Asp124. Lys164 (proton acceptor) is an active-site residue. In terms of domain architecture, TRAM spans 191–209 (EASRGRSREVYIVAMGYMG).

Belongs to the class I-like SAM-binding methyltransferase superfamily. RNA methyltransferase RlmE family.

It is found in the cytoplasm. It carries out the reaction uridine(2552) in 23S rRNA + S-adenosyl-L-methionine = 2'-O-methyluridine(2552) in 23S rRNA + S-adenosyl-L-homocysteine + H(+). Functionally, specifically methylates the uridine in position 2552 of 23S rRNA at the 2'-O position of the ribose in the fully assembled 50S ribosomal subunit. This chain is Ribosomal RNA large subunit methyltransferase E, found in Histophilus somni (strain 129Pt) (Haemophilus somnus).